We begin with the raw amino-acid sequence, 619 residues long: N-acetylmuramoyl-L-alanine amidase domain-containing protein SAOUHSC_02979 (619 aa).

The signal sequence occupies residues 1-27 (MPKNKILIYLLSTTLVLPTLVSPTAYA). Disordered stretches follow at residues 25–83 (AYAD…TIDD), 134–226 (SDYE…SMSD), and 238–290 (EDAK…NQKD). Composition is skewed to basic and acidic residues over residues 30–65 (PQKDTTAKTTSHDSKKSNDDETSKDTTSKDIDKADK), 73–82 (NNDKKFKTID), and 137–146 (EQPRNGEKST). The span at 147-156 (NDSNKNSDNS) shows a compositional bias: low complexity. A compositionally biased stretch (basic and acidic residues) spans 157-175 (IKNDTDTQSSKQDKADNQK). The segment covering 176-192 (APKSNNTKPSTSNKQPN) has biased composition (polar residues). Low complexity predominate over residues 214 to 226 (QKSSSKDNQSMSD). A compositionally biased stretch (basic and acidic residues) spans 238–260 (EDAKKTQKDYASQSKKDKNEKSN). The interval 327 to 468 (IAKDAHRIGQ…LNSIIKHYQL (142 aa)) is N-acetylmuramoyl-L-alanine amidase. Residues 488–617 (DYDDSSDEFK…AAAEELSYIT (130 aa)) form the Peptidase C51 domain.

It in the N-terminal section; belongs to the N-acetylmuramoyl-L-alanine amidase 2 family.

It localises to the secreted. This Staphylococcus aureus (strain NCTC 8325 / PS 47) protein is N-acetylmuramoyl-L-alanine amidase domain-containing protein SAOUHSC_02979.